Reading from the N-terminus, the 425-residue chain is CinA-like protein (425 aa).

This sequence belongs to the CinA family.

The polypeptide is CinA-like protein (Desulfovibrio desulfuricans (strain ATCC 27774 / DSM 6949 / MB)).